A 372-amino-acid polypeptide reads, in one-letter code: Histidinol-phosphate aminotransferase (372 aa).

Lysine 234 is modified (N6-(pyridoxal phosphate)lysine).

It belongs to the class-II pyridoxal-phosphate-dependent aminotransferase family. Histidinol-phosphate aminotransferase subfamily. In terms of assembly, homodimer. Requires pyridoxal 5'-phosphate as cofactor.

It carries out the reaction L-histidinol phosphate + 2-oxoglutarate = 3-(imidazol-4-yl)-2-oxopropyl phosphate + L-glutamate. The protein operates within amino-acid biosynthesis; L-histidine biosynthesis; L-histidine from 5-phospho-alpha-D-ribose 1-diphosphate: step 7/9. This chain is Histidinol-phosphate aminotransferase (hisC), found in Corynebacterium efficiens (strain DSM 44549 / YS-314 / AJ 12310 / JCM 11189 / NBRC 100395).